Consider the following 369-residue polypeptide: Small ribosomal subunit biogenesis GTPase RsgA (369 aa).

A CP-type G domain is found at 88–246 (RTVLERPPVA…LADTPGFNQP (159 aa)). Residues 137–140 (NKQD) and 188–196 (GPSGVGKSS) contribute to the GTP site. The Zn(2+) site is built by cysteine 271, cysteine 276, histidine 278, and cysteine 284. The interval 307-369 (QNPENSRETD…DLDNLQEDWE (63 aa)) is disordered. Residues 359 to 369 (TDLDNLQEDWE) show a composition bias toward acidic residues.

This sequence belongs to the TRAFAC class YlqF/YawG GTPase family. RsgA subfamily. As to quaternary structure, monomer. Associates with 30S ribosomal subunit, binds 16S rRNA. The cofactor is Zn(2+).

The protein resides in the cytoplasm. Its function is as follows. One of several proteins that assist in the late maturation steps of the functional core of the 30S ribosomal subunit. Helps release RbfA from mature subunits. May play a role in the assembly of ribosomal proteins into the subunit. Circularly permuted GTPase that catalyzes slow GTP hydrolysis, GTPase activity is stimulated by the 30S ribosomal subunit. The polypeptide is Small ribosomal subunit biogenesis GTPase RsgA (Synechocystis sp. (strain ATCC 27184 / PCC 6803 / Kazusa)).